A 547-amino-acid polypeptide reads, in one-letter code: Methionine--tRNA ligase (547 aa).

A 'HIGH' region motif is present at residues P15 to H25. Zn(2+) is bound by residues C146, C149, C159, and C162. The short motif at K332–S336 is the 'KMSKS' region element. K335 is a binding site for ATP.

It belongs to the class-I aminoacyl-tRNA synthetase family. MetG type 1 subfamily. In terms of assembly, monomer. Zn(2+) is required as a cofactor.

The protein resides in the cytoplasm. It catalyses the reaction tRNA(Met) + L-methionine + ATP = L-methionyl-tRNA(Met) + AMP + diphosphate. In terms of biological role, is required not only for elongation of protein synthesis but also for the initiation of all mRNA translation through initiator tRNA(fMet) aminoacylation. The sequence is that of Methionine--tRNA ligase (metG) from Buchnera aphidicola subsp. Acyrthosiphon pisum (strain APS) (Acyrthosiphon pisum symbiotic bacterium).